The primary structure comprises 321 residues: Lipoyl synthase (321 aa).

7 residues coordinate [4Fe-4S] cluster: Cys68, Cys73, Cys79, Cys94, Cys98, Cys101, and Ser308. Residues 80–297 (FNHGTATFMI…KELAESIGFT (218 aa)) enclose the Radical SAM core domain.

The protein belongs to the radical SAM superfamily. Lipoyl synthase family. [4Fe-4S] cluster is required as a cofactor.

The protein localises to the cytoplasm. It catalyses the reaction [[Fe-S] cluster scaffold protein carrying a second [4Fe-4S](2+) cluster] + N(6)-octanoyl-L-lysyl-[protein] + 2 oxidized [2Fe-2S]-[ferredoxin] + 2 S-adenosyl-L-methionine + 4 H(+) = [[Fe-S] cluster scaffold protein] + N(6)-[(R)-dihydrolipoyl]-L-lysyl-[protein] + 4 Fe(3+) + 2 hydrogen sulfide + 2 5'-deoxyadenosine + 2 L-methionine + 2 reduced [2Fe-2S]-[ferredoxin]. It functions in the pathway protein modification; protein lipoylation via endogenous pathway; protein N(6)-(lipoyl)lysine from octanoyl-[acyl-carrier-protein]: step 2/2. Functionally, catalyzes the radical-mediated insertion of two sulfur atoms into the C-6 and C-8 positions of the octanoyl moiety bound to the lipoyl domains of lipoate-dependent enzymes, thereby converting the octanoylated domains into lipoylated derivatives. This is Lipoyl synthase from Shewanella pealeana (strain ATCC 700345 / ANG-SQ1).